Here is a 203-residue protein sequence, read N- to C-terminus: Guanylate kinase (203 aa).

The region spanning 3–181 (GTLYIVAAPS…AVAEMCAIFT (179 aa)) is the Guanylate kinase-like domain. 10–17 (APSGAGKS) is a binding site for ATP.

It belongs to the guanylate kinase family.

It is found in the cytoplasm. It carries out the reaction GMP + ATP = GDP + ADP. Its function is as follows. Essential for recycling GMP and indirectly, cGMP. The polypeptide is Guanylate kinase (Xanthomonas euvesicatoria pv. vesicatoria (strain 85-10) (Xanthomonas campestris pv. vesicatoria)).